The chain runs to 208 residues: FMN-dependent NADH:quinone oxidoreductase 4 (208 aa).

The protein belongs to the azoreductase type 1 family. In terms of assembly, homodimer. FMN serves as cofactor.

It carries out the reaction 2 a quinone + NADH + H(+) = 2 a 1,4-benzosemiquinone + NAD(+). The enzyme catalyses N,N-dimethyl-1,4-phenylenediamine + anthranilate + 2 NAD(+) = 2-(4-dimethylaminophenyl)diazenylbenzoate + 2 NADH + 2 H(+). Its function is as follows. Quinone reductase that provides resistance to thiol-specific stress caused by electrophilic quinones. Also exhibits azoreductase activity. Catalyzes the reductive cleavage of the azo bond in aromatic azo compounds to the corresponding amines. This Bacillus cereus (strain ATCC 10987 / NRS 248) protein is FMN-dependent NADH:quinone oxidoreductase 4.